The following is a 396-amino-acid chain: L-lactate dehydrogenase (396 aa).

Residues 1-380 form the FMN hydroxy acid dehydrogenase domain; sequence MIISAASDYR…SGDSLVQELG (380 aa). Tyr24 lines the substrate pocket. FMN is bound by residues Ser106 and Gln127. Tyr129 contributes to the substrate binding site. Thr155 serves as a coordination point for FMN. Residue Arg164 coordinates substrate. Lys251 is an FMN binding site. The active-site Proton acceptor is His275. Arg278 lines the substrate pocket. 306-330 is an FMN binding site; the sequence is DSGIRNGLDVVRMIALGADTVLLGR.

This sequence belongs to the FMN-dependent alpha-hydroxy acid dehydrogenase family. It depends on FMN as a cofactor.

The protein resides in the cell inner membrane. It catalyses the reaction (S)-lactate + A = pyruvate + AH2. Functionally, catalyzes the conversion of L-lactate to pyruvate. Is coupled to the respiratory chain. The polypeptide is L-lactate dehydrogenase (Salmonella choleraesuis (strain SC-B67)).